The chain runs to 74 residues: Large ribosomal subunit protein uL29 (74 aa).

The protein belongs to the universal ribosomal protein uL29 family.

In Nostoc sp. (strain PCC 7120 / SAG 25.82 / UTEX 2576), this protein is Large ribosomal subunit protein uL29.